A 352-amino-acid polypeptide reads, in one-letter code: Histidine biosynthesis bifunctional protein HisB (352 aa).

The interval 1–164 is histidinol-phosphatase; that stretch reads MSQKILFIDR…EIENEILSSF (164 aa). Aspartate 9 serves as the catalytic Nucleophile. Residues aspartate 9 and aspartate 11 each coordinate Mg(2+). Residue aspartate 11 is the Proton donor of the active site. Zn(2+)-binding residues include cysteine 93, histidine 95, cysteine 101, and cysteine 103. Aspartate 130 provides a ligand contact to Mg(2+). Residues 165 to 352 form an imidazoleglycerol-phosphate dehydratase region; sequence RSASYQRTTK…ENLASSKGVI (188 aa).

The protein in the N-terminal section; belongs to the histidinol-phosphatase family. This sequence in the C-terminal section; belongs to the imidazoleglycerol-phosphate dehydratase family. It depends on Mg(2+) as a cofactor. Requires Zn(2+) as cofactor.

Its subcellular location is the cytoplasm. The catalysed reaction is D-erythro-1-(imidazol-4-yl)glycerol 3-phosphate = 3-(imidazol-4-yl)-2-oxopropyl phosphate + H2O. It catalyses the reaction L-histidinol phosphate + H2O = L-histidinol + phosphate. It functions in the pathway amino-acid biosynthesis; L-histidine biosynthesis; L-histidine from 5-phospho-alpha-D-ribose 1-diphosphate: step 6/9. It participates in amino-acid biosynthesis; L-histidine biosynthesis; L-histidine from 5-phospho-alpha-D-ribose 1-diphosphate: step 8/9. This chain is Histidine biosynthesis bifunctional protein HisB, found in Campylobacter jejuni subsp. doylei (strain ATCC BAA-1458 / RM4099 / 269.97).